The following is a 338-amino-acid chain: UPF0252 protein PF1496 (338 aa).

A helical transmembrane segment spans residues I100–S120.

This sequence belongs to the UPF0252 family.

The protein resides in the membrane. The polypeptide is UPF0252 protein PF1496 (Pyrococcus furiosus (strain ATCC 43587 / DSM 3638 / JCM 8422 / Vc1)).